A 157-amino-acid chain; its full sequence is Transcription initiation factor IIA large subunit (157 aa).

It belongs to the TFIIA subunit 1 family. TFIIA is a heterodimer of the large subunit and the small subunit gamma.

It localises to the nucleus. Its function is as follows. TFIIA is a component of the transcription machinery of RNA polymerase II and plays an important role in transcriptional activation. This is Transcription initiation factor IIA large subunit (TOA1) from Encephalitozoon cuniculi (strain GB-M1) (Microsporidian parasite).